A 361-amino-acid chain; its full sequence is Phosphoserine aminotransferase (361 aa).

An L-glutamate-binding site is contributed by R43. Residues 77 to 78 (AS), W103, T153, D173, and Q196 contribute to the pyridoxal 5'-phosphate site. K197 bears the N6-(pyridoxal phosphate)lysine mark. Residue 238–239 (NT) coordinates pyridoxal 5'-phosphate.

The protein belongs to the class-V pyridoxal-phosphate-dependent aminotransferase family. SerC subfamily. Homodimer. It depends on pyridoxal 5'-phosphate as a cofactor.

It localises to the cytoplasm. The catalysed reaction is O-phospho-L-serine + 2-oxoglutarate = 3-phosphooxypyruvate + L-glutamate. The enzyme catalyses 4-(phosphooxy)-L-threonine + 2-oxoglutarate = (R)-3-hydroxy-2-oxo-4-phosphooxybutanoate + L-glutamate. It participates in amino-acid biosynthesis; L-serine biosynthesis; L-serine from 3-phospho-D-glycerate: step 2/3. The protein operates within cofactor biosynthesis; pyridoxine 5'-phosphate biosynthesis; pyridoxine 5'-phosphate from D-erythrose 4-phosphate: step 3/5. Catalyzes the reversible conversion of 3-phosphohydroxypyruvate to phosphoserine and of 3-hydroxy-2-oxo-4-phosphonooxybutanoate to phosphohydroxythreonine. The protein is Phosphoserine aminotransferase of Pseudomonas syringae pv. tomato (strain ATCC BAA-871 / DC3000).